We begin with the raw amino-acid sequence, 217 residues long: Homologous-pairing protein 2 homolog (217 aa).

Residues 89–117 form an interaction with NR3C1, homodimerization and transcriptional activation almost abolished when missing region; that stretch reads LDASIMALTAKVQGLQQSCRHMEAELKEL. The stretch at 93 to 153 forms a coiled coil; sequence IMALTAKVQG…LKNIKAATNH (61 aa). The segment at 118 to 182 is DNA-binding; it reads TSALTTPEMQ…WRKRKRMTTE (65 aa). Residues 118–182 are interaction with NR3C1 decreased when missing; the sequence is TSALTTPEMQ…WRKRKRMTTE (65 aa).

It belongs to the HOP2 family. As to quaternary structure, forms a stable heterodimer with MND1. Interacts with PSMC3/TBP1. Interacts with the DNA-binding domain of the nuclear receptors NR3C1/GR, ESR2/ER-beta, THRB and RXRA. Post-translationally, phosphorylated by PKA, PKC and MAPK.

The protein resides in the nucleus. Its function is as follows. Plays an important role in meiotic recombination. Stimulates DMC1-mediated strand exchange required for pairing homologous chromosomes during meiosis. The complex PSMC3IP/MND1 binds DNA, stimulates the recombinase activity of DMC1 as well as DMC1 D-loop formation from double-strand DNA. This complex stabilizes presynaptic RAD51 and DMC1 filaments formed on single strand DNA to capture double-strand DNA. This complex stimulates both synaptic and presynaptic critical steps in RAD51 and DMC1-promoted homologous pairing. May inhibit HIV-1 viral protein TAT activity and modulate the activity of proteasomes through association with PSMC3. Plays a role as a coactivator in nuclear receptor-mediated transcription. The polypeptide is Homologous-pairing protein 2 homolog (Psmc3ip) (Rattus norvegicus (Rat)).